The sequence spans 294 residues: ATP phosphoribosyltransferase (294 aa).

The protein belongs to the ATP phosphoribosyltransferase family. Long subfamily. Mg(2+) is required as a cofactor.

The protein localises to the cytoplasm. The catalysed reaction is 1-(5-phospho-beta-D-ribosyl)-ATP + diphosphate = 5-phospho-alpha-D-ribose 1-diphosphate + ATP. It participates in amino-acid biosynthesis; L-histidine biosynthesis; L-histidine from 5-phospho-alpha-D-ribose 1-diphosphate: step 1/9. Feedback inhibited by histidine. Functionally, catalyzes the condensation of ATP and 5-phosphoribose 1-diphosphate to form N'-(5'-phosphoribosyl)-ATP (PR-ATP). Has a crucial role in the pathway because the rate of histidine biosynthesis seems to be controlled primarily by regulation of HisG enzymatic activity. The sequence is that of ATP phosphoribosyltransferase from Pelodictyon phaeoclathratiforme (strain DSM 5477 / BU-1).